The chain runs to 291 residues: Small ribosomal subunit protein uS2 (291 aa).

Residues 256-291 form a disordered region; the sequence is LRGEGTAPAASEEQPAEEPAPAAAEAQTDAAVGTAV. Positions 261 to 291 are enriched in low complexity; that stretch reads TAPAASEEQPAEEPAPAAAEAQTDAAVGTAV.

The protein belongs to the universal ribosomal protein uS2 family.

In Frankia alni (strain DSM 45986 / CECT 9034 / ACN14a), this protein is Small ribosomal subunit protein uS2.